The chain runs to 142 residues: Secreted acidic protein 1B (142 aa).

2 stretches are compositionally biased toward acidic residues: residues 1-47 (SDDE…DDNE) and 54-64 (TNDDVDYGDGN). A disordered region spans residues 1-74 (SDDESGDDEN…DEAREIGDHS (74 aa)). The Extracellular portion of the chain corresponds to 1-123 (SDDESGDDEN…YLRSGGSHFK (123 aa)). The segment covering 65-74 (DEAREIGDHS) has biased composition (basic and acidic residues). The chain crosses the membrane as a helical span at residues 124 to 141 (GQLLNITLGLGFCILFLL). A topological domain (cytoplasmic) is located at residue Leu142.

As to expression, component of the acid-insoluble and acid-soluble organic matrix of the aragonitic skeleton (at protein level).

It localises to the membrane. The protein is Secreted acidic protein 1B of Acropora millepora (Staghorn coral).